A 543-amino-acid chain; its full sequence is Chaperonin GroEL 1 (543 aa).

Residues 29–32 (TLGP), Lys-50, 86–90 (DGTTT), Gly-414, and Asp-493 contribute to the ATP site. A disordered region spans residues 524 to 543 (KEDKGAPAGMGGMPPGGGMY). Residues 531–543 (AGMGGMPPGGGMY) are compositionally biased toward gly residues.

This sequence belongs to the chaperonin (HSP60) family. As to quaternary structure, forms a cylinder of 14 subunits composed of two heptameric rings stacked back-to-back. Interacts with the co-chaperonin GroES.

The protein resides in the cytoplasm. The enzyme catalyses ATP + H2O + a folded polypeptide = ADP + phosphate + an unfolded polypeptide.. Together with its co-chaperonin GroES, plays an essential role in assisting protein folding. The GroEL-GroES system forms a nano-cage that allows encapsulation of the non-native substrate proteins and provides a physical environment optimized to promote and accelerate protein folding. This chain is Chaperonin GroEL 1, found in Syntrophobacter fumaroxidans (strain DSM 10017 / MPOB).